A 216-amino-acid chain; its full sequence is UPF0502 protein Pmen_2627 (216 aa).

The protein belongs to the UPF0502 family.

This Ectopseudomonas mendocina (strain ymp) (Pseudomonas mendocina) protein is UPF0502 protein Pmen_2627.